The following is a 928-amino-acid chain: DNA ligase 4 (928 aa).

Glu-302, Lys-304, Arg-309, Glu-362, Phe-409, Glu-469, Lys-474, Lys-492, and Lys-494 together coordinate ATP. Lys-304 (N6-AMP-lysine intermediate) is an active-site residue. Mg(2+) is bound at residue Glu-362. Mg(2+) is bound at residue Glu-469. BRCT domains lie at 673–769 (VESD…PYFI) and 821–927 (PWIY…DYKF).

The protein belongs to the ATP-dependent DNA ligase family. The cofactor is Mg(2+).

It localises to the nucleus. The enzyme catalyses ATP + (deoxyribonucleotide)n-3'-hydroxyl + 5'-phospho-(deoxyribonucleotide)m = (deoxyribonucleotide)n+m + AMP + diphosphate.. In terms of biological role, DNA ligase involved in DNA non-homologous end joining (NHEJ); required for double-strand break (DSB) repair. Not required for the repair of DSBs induced by ionizing radiation or UV light. Has an important role in morphogenesis, positively affecting the capacity to form hyphae. The protein is DNA ligase 4 (LIG4) of Candida albicans (strain SC5314 / ATCC MYA-2876) (Yeast).